Here is a 258-residue protein sequence, read N- to C-terminus: Acetylglutamate kinase (258 aa).

Residues 41–42 (GG), arginine 63, and asparagine 156 each bind substrate.

It belongs to the acetylglutamate kinase family. ArgB subfamily.

Its subcellular location is the cytoplasm. The enzyme catalyses N-acetyl-L-glutamate + ATP = N-acetyl-L-glutamyl 5-phosphate + ADP. It functions in the pathway amino-acid biosynthesis; L-arginine biosynthesis; N(2)-acetyl-L-ornithine from L-glutamate: step 2/4. Catalyzes the ATP-dependent phosphorylation of N-acetyl-L-glutamate. The chain is Acetylglutamate kinase from Bacillus licheniformis (strain ATCC 14580 / DSM 13 / JCM 2505 / CCUG 7422 / NBRC 12200 / NCIMB 9375 / NCTC 10341 / NRRL NRS-1264 / Gibson 46).